Consider the following 344-residue polypeptide: Arginine N-succinyltransferase (344 aa).

Leu125 contributes to the succinyl-CoA binding site. His229 (proton donor) is an active-site residue.

The protein belongs to the arginine N-succinyltransferase family.

It catalyses the reaction succinyl-CoA + L-arginine = N(2)-succinyl-L-arginine + CoA + H(+). Its pathway is amino-acid degradation; L-arginine degradation via AST pathway; L-glutamate and succinate from L-arginine: step 1/5. Its function is as follows. Catalyzes the transfer of succinyl-CoA to arginine to produce N(2)-succinylarginine. The polypeptide is Arginine N-succinyltransferase (Shigella flexneri serotype 5b (strain 8401)).